A 217-amino-acid chain; its full sequence is 3,4-dihydroxy-2-butanone 4-phosphate synthase (217 aa).

Residues 37–38 (RE), Asp-42, 150–154 (RGGHT), and Glu-174 each bind D-ribulose 5-phosphate. Residue Glu-38 participates in Mg(2+) binding. Position 153 (His-153) interacts with Mg(2+).

It belongs to the DHBP synthase family. As to quaternary structure, homodimer. It depends on Mg(2+) as a cofactor. Requires Mn(2+) as cofactor.

The catalysed reaction is D-ribulose 5-phosphate = (2S)-2-hydroxy-3-oxobutyl phosphate + formate + H(+). The protein operates within cofactor biosynthesis; riboflavin biosynthesis; 2-hydroxy-3-oxobutyl phosphate from D-ribulose 5-phosphate: step 1/1. In terms of biological role, catalyzes the conversion of D-ribulose 5-phosphate to formate and 3,4-dihydroxy-2-butanone 4-phosphate. In Pectobacterium atrosepticum (strain SCRI 1043 / ATCC BAA-672) (Erwinia carotovora subsp. atroseptica), this protein is 3,4-dihydroxy-2-butanone 4-phosphate synthase.